We begin with the raw amino-acid sequence, 436 residues long: Serine--tRNA ligase (436 aa).

A compositionally biased stretch (basic and acidic residues) spans 43 to 55; sequence TKSEQLKQKRNEV. The segment at 43-68 is disordered; it reads TKSEQLKQKRNEVSDQIAQAKRNKED. 237 to 239 is an L-serine binding site; sequence TAE. An ATP-binding site is contributed by 268-270; sequence RSE. Residue Glu291 participates in L-serine binding. 355-358 provides a ligand contact to ATP; the sequence is EISS. L-serine is bound at residue Ser390.

The protein belongs to the class-II aminoacyl-tRNA synthetase family. Type-1 seryl-tRNA synthetase subfamily. As to quaternary structure, homodimer. The tRNA molecule binds across the dimer.

It localises to the cytoplasm. It catalyses the reaction tRNA(Ser) + L-serine + ATP = L-seryl-tRNA(Ser) + AMP + diphosphate + H(+). The enzyme catalyses tRNA(Sec) + L-serine + ATP = L-seryl-tRNA(Sec) + AMP + diphosphate + H(+). The protein operates within aminoacyl-tRNA biosynthesis; selenocysteinyl-tRNA(Sec) biosynthesis; L-seryl-tRNA(Sec) from L-serine and tRNA(Sec): step 1/1. Its function is as follows. Catalyzes the attachment of serine to tRNA(Ser). Is also able to aminoacylate tRNA(Sec) with serine, to form the misacylated tRNA L-seryl-tRNA(Sec), which will be further converted into selenocysteinyl-tRNA(Sec). The chain is Serine--tRNA ligase from Lactobacillus johnsonii (strain CNCM I-12250 / La1 / NCC 533).